Consider the following 150-residue polypeptide: Large ribosomal subunit protein bL9 (150 aa).

This sequence belongs to the bacterial ribosomal protein bL9 family.

Functionally, binds to the 23S rRNA. This chain is Large ribosomal subunit protein bL9, found in Corynebacterium glutamicum (strain R).